The primary structure comprises 316 residues: ATP synthase gamma chain (316 aa).

It belongs to the ATPase gamma chain family. F-type ATPases have 2 components, CF(1) - the catalytic core - and CF(0) - the membrane proton channel. CF(1) has five subunits: alpha(3), beta(3), gamma(1), delta(1), epsilon(1). CF(0) has three main subunits: a, b and c.

The protein resides in the cellular thylakoid membrane. In terms of biological role, produces ATP from ADP in the presence of a proton gradient across the membrane. The gamma chain is believed to be important in regulating ATPase activity and the flow of protons through the CF(0) complex. This is ATP synthase gamma chain from Prochlorococcus marinus (strain MIT 9515).